Here is a 60-residue protein sequence, read N- to C-terminus: UPF0291 protein Nther_1806 (60 aa).

Belongs to the UPF0291 family.

It localises to the cytoplasm. This is UPF0291 protein Nther_1806 from Natranaerobius thermophilus (strain ATCC BAA-1301 / DSM 18059 / JW/NM-WN-LF).